The sequence spans 67 residues: Large ribosomal subunit protein bL35 (67 aa).

A compositionally biased stretch (basic residues) spans Met1–Val16. Residues Met1–Lys23 form a disordered region.

Belongs to the bacterial ribosomal protein bL35 family.

This chain is Large ribosomal subunit protein bL35, found in Variovorax paradoxus (strain S110).